The following is a 306-amino-acid chain: Aspartate carbamoyltransferase catalytic subunit (306 aa).

Positions 55 and 56 each coordinate carbamoyl phosphate. Lys-84 contributes to the L-aspartate binding site. 3 residues coordinate carbamoyl phosphate: Arg-105, His-133, and Gln-136. Residues Arg-166 and Arg-227 each contribute to the L-aspartate site. Carbamoyl phosphate-binding residues include Leu-265 and Pro-266.

The protein belongs to the aspartate/ornithine carbamoyltransferase superfamily. ATCase family. In terms of assembly, heterododecamer (2C3:3R2) of six catalytic PyrB chains organized as two trimers (C3), and six regulatory PyrI chains organized as three dimers (R2).

It catalyses the reaction carbamoyl phosphate + L-aspartate = N-carbamoyl-L-aspartate + phosphate + H(+). The protein operates within pyrimidine metabolism; UMP biosynthesis via de novo pathway; (S)-dihydroorotate from bicarbonate: step 2/3. Its function is as follows. Catalyzes the condensation of carbamoyl phosphate and aspartate to form carbamoyl aspartate and inorganic phosphate, the committed step in the de novo pyrimidine nucleotide biosynthesis pathway. This chain is Aspartate carbamoyltransferase catalytic subunit, found in Aeromonas salmonicida (strain A449).